The following is a 102-amino-acid chain: Thioredoxin (102 aa).

The region spanning Met-1–Gln-102 is the Thioredoxin domain. Cys-28 and Cys-31 are disulfide-bonded.

It belongs to the thioredoxin family.

In terms of biological role, participates in various redox reactions through the reversible oxidation of its active center dithiol to a disulfide and catalyzes dithiol-disulfide exchange reactions. In Chlamydia muridarum (strain MoPn / Nigg), this protein is Thioredoxin (trxA).